Here is a 441-residue protein sequence, read N- to C-terminus: MDIRWEEILEEISKQIPPKYFSNFIAPLRFDKWENQVVHLMAPSGGIKRHVETKYIGFIEDAVYQVVGDRFKVSILTESETSSHVLKEVIQSKFDDSDSDLNPEYIFSNYITSDSNRIAFTAAKSVVEQPGKYNPLYLFGPVGVGKTHLLHSIGNEIKKKDPWKTVRYVNSTSFLNEFIFTVRQNNRESLESFKIRYQSYNVLLFDDIQFLNGGAEKTQEEFFALFNFLYDRKRQIVIASDRPSYELPLHDRLKSRFVHGLQADIKSHDLELRKSLLKSNFSEFNIPASDNLLHWLAERLEGDSRALIGIVNDLVMYKKAYEYFLLTEDKIKEIAEARFLTNKKRIGFSPDMVIDLVCERTNVARKDLLGKSRKADFIPPRHLCMLLLHDVLNVPKAQIGRIFSTTHSTVIHGIDKFKERMKSEAQWEDLFHTIKHKISFQ.

The segment at 1-71 is domain I, interacts with DnaA modulators; sequence MDIRWEEILE…AVYQVVGDRF (71 aa). The segment at 71–99 is domain II; that stretch reads FKVSILTESETSSHVLKEVIQSKFDDSDS. A domain III, AAA+ region region spans residues 100–318; that stretch reads DLNPEYIFSN…GIVNDLVMYK (219 aa). 4 residues coordinate ATP: Gly143, Gly145, Lys146, and Thr147. The domain IV, binds dsDNA stretch occupies residues 319 to 441; sequence KAYEYFLLTE…HTIKHKISFQ (123 aa).

This sequence belongs to the DnaA family. Oligomerizes as a right-handed, spiral filament on DNA at oriC.

It localises to the cytoplasm. Functionally, plays an essential role in the initiation and regulation of chromosomal replication. ATP-DnaA binds to the origin of replication (oriC) to initiate formation of the DNA replication initiation complex once per cell cycle. Binds the DnaA box (a 9 base pair repeat at the origin) and separates the double-stranded (ds)DNA. Forms a right-handed helical filament on oriC DNA; dsDNA binds to the exterior of the filament while single-stranded (ss)DNA is stabiized in the filament's interior. The ATP-DnaA-oriC complex binds and stabilizes one strand of the AT-rich DNA unwinding element (DUE), permitting loading of DNA polymerase. After initiation quickly degrades to an ADP-DnaA complex that is not apt for DNA replication. Binds acidic phospholipids. This is Chromosomal replication initiator protein DnaA from Leptospira biflexa serovar Patoc (strain Patoc 1 / Ames).